Reading from the N-terminus, the 211-residue chain is ATP phosphoribosyltransferase (211 aa).

This sequence belongs to the ATP phosphoribosyltransferase family. Short subfamily. As to quaternary structure, heteromultimer composed of HisG and HisZ subunits.

The protein localises to the cytoplasm. The catalysed reaction is 1-(5-phospho-beta-D-ribosyl)-ATP + diphosphate = 5-phospho-alpha-D-ribose 1-diphosphate + ATP. Its pathway is amino-acid biosynthesis; L-histidine biosynthesis; L-histidine from 5-phospho-alpha-D-ribose 1-diphosphate: step 1/9. Its function is as follows. Catalyzes the condensation of ATP and 5-phosphoribose 1-diphosphate to form N'-(5'-phosphoribosyl)-ATP (PR-ATP). Has a crucial role in the pathway because the rate of histidine biosynthesis seems to be controlled primarily by regulation of HisG enzymatic activity. The chain is ATP phosphoribosyltransferase from Pseudomonas entomophila (strain L48).